A 269-amino-acid chain; its full sequence is Surfeit locus protein 4 (269 aa).

Transmembrane regions (helical) follow at residues 64 to 84 (FLAT…CVLI), 92 to 112 (YACF…SILW), 179 to 199 (FFSI…AIGF), 203 to 223 (LAAL…NAFW), and 242 to 262 (TTSV…GVSM). The Di-lysine motif signature appears at 266–269 (KKEW).

Belongs to the SURF4 family.

It is found in the endoplasmic reticulum membrane. Its subcellular location is the endoplasmic reticulum-Golgi intermediate compartment membrane. The protein localises to the golgi apparatus membrane. In terms of biological role, endoplasmic reticulum cargo receptor that mediates the export of lipoproteins by recruiting cargos into COPII vesicles to facilitate their secretion. Acts as a cargo receptor for lipoproteins bearing both APOB and APOA1, thereby regulating lipoprotein delivery and the maintenance of lipid homeostasis. The protein is Surfeit locus protein 4 of Takifugu rubripes (Japanese pufferfish).